A 433-amino-acid chain; its full sequence is C4-dicarboxylate transport protein (433 aa).

A run of 8 helical transmembrane segments spans residues 8 to 28, 44 to 64, 78 to 98, 148 to 168, 188 to 208, 222 to 242, 307 to 327, and 355 to 375; these read ILYV…HFWP, LIKM…IAGM, LLYF…AAHL, GDIL…AVLG, IVHV…AFTI, LIGT…GTIA, IYMT…LTLM, and AATL…ILGI.

Belongs to the dicarboxylate/amino acid:cation symporter (DAACS) (TC 2.A.23) family.

The protein resides in the cell inner membrane. In terms of biological role, responsible for the transport of dicarboxylates such as succinate, fumarate, and malate from the periplasm across the membrane. This is C4-dicarboxylate transport protein from Cupriavidus taiwanensis (strain DSM 17343 / BCRC 17206 / CCUG 44338 / CIP 107171 / LMG 19424 / R1) (Ralstonia taiwanensis (strain LMG 19424)).